Here is an 896-residue protein sequence, read N- to C-terminus: Pentatricopeptide repeat-containing protein At5g03800 (896 aa).

17 PPR repeats span residues 113–143, 144–178, 180–214, 215–247, 248–278, 284–318, 319–349, 350–380, 381–415, 416–450, 451–481, 484–519, 520–554, 555–585, 586–620, 621–653, and 659–689; these read KTRL…LSSP, TVVS…GLVQ, NEYT…GFLN, SVFV…IPQR, DVAS…MNRV, DSFT…GLMQ, ELSV…MMAQ, DAVT…VTEK, NTIT…GVEL, TDFS…GTAF, NPCI…WPSN, SSKA…KLFL, DEVS…GYFS, DISL…MREH, DVIS…EIKP, DIIT…MKTI, and TTEH…MPVQ. The interval 694-769 is type E motif; it reads VLRALLDSCR…HPAKSWIIHE (76 aa). Residues 770–800 are type E(+) motif; sequence NKIHSFHARDTSHPQEKDIYRGLEILIMECL. Residues 801-896 form a type DYW motif region; that stretch reads KVGYEPNTEY…NGKCSCRDLW (96 aa).

This sequence belongs to the PPR family. PCMP-H subfamily.

In terms of biological role, may play a role in embryogenesis. The protein is Pentatricopeptide repeat-containing protein At5g03800 (EMB175) of Arabidopsis thaliana (Mouse-ear cress).